Reading from the N-terminus, the 406-residue chain is MSLSITRENFDEWMMPVYAPAPFIPVRGEGSRLWDQQGKEYIDFAGGIAVNALGHAHPALREALNEQASKFWHTGNGYTNEPVLRLAKMLIDATFAERVFFCNSGAEANEAALKLARKYAHDRFGTHKSGIVAFKNAFHGRTLFTVSAGGQPAYSQDFAPLPPDIRHAVYNDLNAASELIDDTTCAVIVEPMQGEGGVLPATKAFLQGLRELCDRHNALLIFDEVQTGVGRTGELYAYMHYGVTPDLLTTAKALGGGFPIGALLATEKCASVMTVGTHGTTYGGNPLASAVAGKLLEIVNTPEMLNGVKQRHDGFVERLNAINERFGLFSEIRGLGLLIGCVLEAEFAGKAKLISQEAAKAGVMVLIAGANVVRFAPALNVSKEEVATGLDRFALACERIKAGGSS.

K252 is modified (N6-(pyridoxal phosphate)lysine).

This sequence belongs to the class-III pyridoxal-phosphate-dependent aminotransferase family. AstC subfamily. The cofactor is pyridoxal 5'-phosphate.

It catalyses the reaction N(2)-succinyl-L-ornithine + 2-oxoglutarate = N-succinyl-L-glutamate 5-semialdehyde + L-glutamate. It functions in the pathway amino-acid degradation; L-arginine degradation via AST pathway; L-glutamate and succinate from L-arginine: step 3/5. In terms of biological role, catalyzes the transamination of N(2)-succinylornithine and alpha-ketoglutarate into N(2)-succinylglutamate semialdehyde and glutamate. Can also act as an acetylornithine aminotransferase. The polypeptide is Succinylornithine transaminase (Citrobacter koseri (strain ATCC BAA-895 / CDC 4225-83 / SGSC4696)).